The sequence spans 360 residues: 8-hydroxygeraniol dehydrogenase (360 aa).

Cys-50, His-72, Cys-103, Cys-106, Cys-109, Cys-117, and Cys-166 together coordinate Zn(2+).

The protein belongs to the zinc-containing alcohol dehydrogenase family. Zn(2+) is required as a cofactor. Present in seedlings and vascular tissues (at protein level). Restricted to the epidermis.

The enzyme catalyses (6E)-8-hydroxygeraniol + 2 NADP(+) = (6E)-8-oxogeranial + 2 NADPH + 2 H(+). Its function is as follows. Dehydrogenase involved in the biosynthesis of oxogeranial from hydroxygeraniol, a precursor of the terpenoid indole alkaloids such as vinblastine and vincristine. The protein is 8-hydroxygeraniol dehydrogenase (10HGO) of Catharanthus roseus (Madagascar periwinkle).